Reading from the N-terminus, the 722-residue chain is Bifunctional UDP-N-acetylglucosamine 2-epimerase/N-acetylmannosamine kinase (722 aa).

Residues Arg-19, Ser-23, Arg-113, His-220, and Asn-253 each coordinate UDP. Lys-259, Glu-271, Lys-280, and His-281 together coordinate CMP-N-acetyl-beta-neuraminate. Val-282, Ser-301, Ser-302, Glu-307, and Arg-321 together coordinate UDP. An N-acetylmannosamine kinase region spans residues 406 to 722; sequence TLSALAVDLG…VLDYTTRRIH (317 aa). Residue Asp-413 coordinates Mg(2+). Gly-416 provides a ligand contact to an N-acyl-D-mannosamine 6-phosphate. ADP contacts are provided by Thr-417, Asn-418, and Arg-420. 6 residues coordinate an N-acyl-D-mannosamine 6-phosphate: Gly-476, Arg-477, Thr-489, Asn-516, Asp-517, and Gly-545. Residues Gly-476, Arg-477, Thr-489, Asn-516, and Asp-517 each coordinate an N-acyl-D-mannosamine. Asp-517 is a catalytic residue. The an N-acyl-D-mannosamine site is built by Glu-566 and His-569. His-569 provides a ligand contact to an N-acyl-D-mannosamine 6-phosphate. Zn(2+)-binding residues include His-569, Cys-579, Cys-581, and Cys-586. Glu-588 is an an N-acyl-D-mannosamine 6-phosphate binding site. Position 588 (Glu-588) interacts with an N-acyl-D-mannosamine.

The protein in the N-terminal section; belongs to the UDP-N-acetylglucosamine 2-epimerase family. In the C-terminal section; belongs to the ROK (NagC/XylR) family. Homodimer. Homotetramer. Homohexamer. The hexameric form exhibits both enzyme activities, whereas the dimeric form only catalyzes the phosphorylation of N-acyl-D-mannosamine. Post-translationally, phosphorylated. Phosphorylation by PKC activates the UDP-N-acetylglucosamine 2-epimerase activity. In terms of tissue distribution, widely expressed. Highest expression is observed in liver.

It is found in the cytoplasm. It localises to the cytosol. It carries out the reaction UDP-N-acetyl-alpha-D-glucosamine + H2O = aldehydo-N-acetyl-D-mannosamine + UDP + H(+). The enzyme catalyses an N-acyl-D-mannosamine + ATP = an N-acyl-D-mannosamine 6-phosphate + ADP + H(+). The protein operates within amino-sugar metabolism; N-acetylneuraminate biosynthesis. With respect to regulation, the UDP-N-acetylglucosamine 2-epimerase activity, in contrast to the N-acetylmannosamine kinase activity, exhibits allosteric regulation by cytidine monophosphate-N-acetylneuraminic acid (CMP-Neu5Ac), the end product of neuraminic acid biosynthesis. Moreover, the activity is contingent upon the oligomeric state of the enzyme. The monomeric form is inactive, while the dimeric form selectively catalyzes the phosphorylation of N-acetylmannosamine. The hexameric form, on the other hand, demonstrates full proficiency in both enzyme activities. Furthermore, the UDP-N-acetylglucosamine 2-epimerase activity is increased by PKC-mediated phosphorylation. Its function is as follows. Bifunctional enzyme that possesses both UDP-N-acetylglucosamine 2-epimerase and N-acetylmannosamine kinase activities, and serves as the initiator of the biosynthetic pathway leading to the production of N-acetylneuraminic acid (NeuAc), a critical precursor in the synthesis of sialic acids. By catalyzing this pivotal and rate-limiting step in sialic acid biosynthesis, this enzyme assumes a pivotal role in governing the regulation of cell surface sialylation. Sialic acids represent a category of negatively charged sugars that reside on the surface of cells as terminal components of glycoconjugates and mediate important functions in various cellular processes, including cell adhesion, signal transduction, and cellular recognition. This Rattus norvegicus (Rat) protein is Bifunctional UDP-N-acetylglucosamine 2-epimerase/N-acetylmannosamine kinase.